The primary structure comprises 157 residues: Endoribonuclease YbeY (157 aa).

Residues histidine 113, histidine 117, and histidine 123 each coordinate Zn(2+).

Belongs to the endoribonuclease YbeY family. Requires Zn(2+) as cofactor.

It is found in the cytoplasm. In terms of biological role, single strand-specific metallo-endoribonuclease involved in late-stage 70S ribosome quality control and in maturation of the 3' terminus of the 16S rRNA. The chain is Endoribonuclease YbeY from Ehrlichia ruminantium (strain Gardel).